We begin with the raw amino-acid sequence, 652 residues long: DNA ligase (652 aa).

NAD(+) is bound by residues 29–33, 78–79, and E107; these read DSDYD and SL. The active-site N6-AMP-lysine intermediate is the K109. The NAD(+) site is built by R130, E164, K278, and K302. Zn(2+) is bound by residues C395, C398, C413, and C418. Residues 577–652 enclose the BRCT domain; sequence NSDAALFGLT…IEDEDWLRQL (76 aa).

Belongs to the NAD-dependent DNA ligase family. LigA subfamily. Mg(2+) is required as a cofactor. The cofactor is Mn(2+).

The catalysed reaction is NAD(+) + (deoxyribonucleotide)n-3'-hydroxyl + 5'-phospho-(deoxyribonucleotide)m = (deoxyribonucleotide)n+m + AMP + beta-nicotinamide D-nucleotide.. DNA ligase that catalyzes the formation of phosphodiester linkages between 5'-phosphoryl and 3'-hydroxyl groups in double-stranded DNA using NAD as a coenzyme and as the energy source for the reaction. It is essential for DNA replication and repair of damaged DNA. This chain is DNA ligase, found in Streptococcus pyogenes serotype M12 (strain MGAS2096).